The chain runs to 929 residues: Formin-like protein 11 (929 aa).

Residues Met-1–Gly-28 form the signal peptide. The disordered stretch occupies residues Glu-153 to Ser-215. Over residues Lys-171–Pro-189 the composition is skewed to polar residues. The span at Arg-191–Ser-215 shows a compositional bias: basic and acidic residues. Residues Phe-222–Met-242 form a helical membrane-spanning segment. Disordered stretches follow at residues Pro-372–Asn-472 and Ala-726–Thr-749. Residues Met-382–Met-447 are compositionally biased toward pro residues. Residues Val-468–Ser-898 enclose the FH2 domain. Residues Lys-738–Thr-749 show a composition bias toward basic and acidic residues.

Belongs to the formin-like family. Class-I subfamily.

It localises to the membrane. The sequence is that of Formin-like protein 11 (FH11) from Oryza sativa subsp. japonica (Rice).